Reading from the N-terminus, the 141-residue chain is Large ribosomal subunit protein uL11 (141 aa).

The protein belongs to the universal ribosomal protein uL11 family. As to quaternary structure, part of the ribosomal stalk of the 50S ribosomal subunit. Interacts with L10 and the large rRNA to form the base of the stalk. L10 forms an elongated spine to which L12 dimers bind in a sequential fashion forming a multimeric L10(L12)X complex. In terms of processing, one or more lysine residues are methylated.

In terms of biological role, forms part of the ribosomal stalk which helps the ribosome interact with GTP-bound translation factors. The sequence is that of Large ribosomal subunit protein uL11 from Streptococcus pyogenes serotype M1.